Reading from the N-terminus, the 94-residue chain is RING finger protein Z (94 aa).

A compositionally biased stretch (polar residues) spans 1-19; that stretch reads MGNCNGASKSNQPDSSRVT. The interval 1-20 is disordered; sequence MGNCNGASKSNQPDSSRVTQ. Residue Gly2 is the site of N-myristoyl glycine; by host attachment. An RING-type; atypical zinc finger spans residues 39–75; sequence CKCCWFADTNLITCNDHYLCLRCHQVMLRNSDLCNIC. The PTAP/PSAP motif motif lies at 89–92; that stretch reads PTAP.

It belongs to the arenaviridae Z protein family. In terms of assembly, interacts with protein NP; this interaction probably directs the encapsidated genome to budding sites. Interacts (via RING domain) with polymerase L; this interaction inhibits viral transcription and replication, Z partially blocks the product exit tunnel for the releasing nascent RNA product. Interacts with the glycoprotein complex; this interaction plays a role in virion budding. Interacts with host eIF4E; this interaction results in eIF4E reduced affinity for its substrate, the 5'-m7 G cap structure. Interacts (via late-budding domain) with host TSG101; this interaction is essential for budding and release of viral particles. Interacts with host RPLP0; this interaction may serve to load ribosome-like particles inside the virion. Interacts with host PML; this interaction induces PML bodies redistribution in the cytoplasm upon viral infection. Myristoylation is required for the role of RING finger protein Z in assembly and budding.

The protein resides in the virion. Its subcellular location is the host cytoplasm. The protein localises to the host perinuclear region. It localises to the host cell membrane. Plays a crucial role in virion assembly and budding. Expressed late in the virus life cycle, it acts as an inhibitor of viral transcription and RNA synthesis by interacting with the viral polymerase L. Presumably recruits the NP encapsidated genome to cellular membranes at budding sites via direct interaction with NP. Plays critical roles in the final steps of viral release by interacting with host TSG101, a member of the vacuolar protein-sorting pathway and using other cellular host proteins involved in vesicle formation pathway. The budding of the virus progeny occurs after association of protein Z with the viral glycoprotein complex SSP-GP1-GP2 at the cell periphery, step that requires myristoylation of protein Z. Also selectively represses protein production by associating with host eIF4E. In cell-based minigenome assay, has an inhibitory effect on the ribonucleoprotein machinery (vRNP), which is responsible for the replication and transcription of the viral genome. The protein is RING finger protein Z of Akodon azarae (Azara's grass mouse).